We begin with the raw amino-acid sequence, 350 residues long: Holliday junction branch migration complex subunit RuvB (350 aa).

The large ATPase domain (RuvB-L) stretch occupies residues 1 to 182 (MEDRIVTPLN…FGVLCPMDFY (182 aa)). ATP is bound by residues leucine 21, arginine 22, glycine 63, lysine 66, threonine 67, threonine 68, 129-131 (EDY), arginine 172, tyrosine 182, and arginine 219. Position 67 (threonine 67) interacts with Mg(2+). Residues 183–253 (DQEELSEIVV…TSKAALELLE (71 aa)) form a small ATPAse domain (RuvB-S) region. A head domain (RuvB-H) region spans residues 256 to 350 (KEGFDSIDNK…KQSSLFDGEV (95 aa)). DNA is bound by residues arginine 311 and arginine 316.

Belongs to the RuvB family. In terms of assembly, homohexamer. Forms an RuvA(8)-RuvB(12)-Holliday junction (HJ) complex. HJ DNA is sandwiched between 2 RuvA tetramers; dsDNA enters through RuvA and exits via RuvB. An RuvB hexamer assembles on each DNA strand where it exits the tetramer. Each RuvB hexamer is contacted by two RuvA subunits (via domain III) on 2 adjacent RuvB subunits; this complex drives branch migration. In the full resolvosome a probable DNA-RuvA(4)-RuvB(12)-RuvC(2) complex forms which resolves the HJ.

It is found in the cytoplasm. The catalysed reaction is ATP + H2O = ADP + phosphate + H(+). Its function is as follows. The RuvA-RuvB-RuvC complex processes Holliday junction (HJ) DNA during genetic recombination and DNA repair, while the RuvA-RuvB complex plays an important role in the rescue of blocked DNA replication forks via replication fork reversal (RFR). RuvA specifically binds to HJ cruciform DNA, conferring on it an open structure. The RuvB hexamer acts as an ATP-dependent pump, pulling dsDNA into and through the RuvAB complex. RuvB forms 2 homohexamers on either side of HJ DNA bound by 1 or 2 RuvA tetramers; 4 subunits per hexamer contact DNA at a time. Coordinated motions by a converter formed by DNA-disengaged RuvB subunits stimulates ATP hydrolysis and nucleotide exchange. Immobilization of the converter enables RuvB to convert the ATP-contained energy into a lever motion, pulling 2 nucleotides of DNA out of the RuvA tetramer per ATP hydrolyzed, thus driving DNA branch migration. The RuvB motors rotate together with the DNA substrate, which together with the progressing nucleotide cycle form the mechanistic basis for DNA recombination by continuous HJ branch migration. Branch migration allows RuvC to scan DNA until it finds its consensus sequence, where it cleaves and resolves cruciform DNA. This chain is Holliday junction branch migration complex subunit RuvB, found in Clostridium kluyveri (strain NBRC 12016).